The following is a 46-amino-acid chain: Mu-hexatoxin-Mg2a (46 aa).

5 disulfides stabilise this stretch: cysteine 3–cysteine 18, cysteine 10–cysteine 24, cysteine 17–cysteine 36, cysteine 21–cysteine 43, and cysteine 26–cysteine 34.

It belongs to the neurotoxin 02 (plectoxin) family. 02 (plectoxin) subfamily. In terms of tissue distribution, expressed by the venom gland.

The protein localises to the secreted. Its function is as follows. Competes for binding at site 3 of the insect voltage-gated sodium channel (Nav). Insecticidal neurotoxin. Causes temporary paralysis to lepidopteran larvae (10.3 nmol/g) or to crickets (doses from 0.93 to 119 ug/g). Is not toxic to mice when injected intracranially (high doses). In Macrothele gigas (Japanese funnel web spider), this protein is Mu-hexatoxin-Mg2a.